The following is a 788-amino-acid chain: Patatin-like phospholipase domain-containing protein DEHA2B04136g (788 aa).

A helical membrane pass occupies residues 136–156 (WPILIFISCWISLLCFMYIIV). Residues 311–503 (LCLSGGACFT…RTDIPIDALN (193 aa)) enclose the PNPLA domain. Residues 342 to 346 (GTSGG) carry the GXSXG motif. Serine 344 functions as the Nucleophile in the catalytic mechanism. The active-site Proton acceptor is the aspartate 490. Positions 662 to 672 (ANFNTLTSSDS) are enriched in polar residues. Residues 662–771 (ANFNTLTSSD…DTGSRFLKSF (110 aa)) are disordered. Acidic residues-rich tracts occupy residues 690–705 (MFDD…DDEV) and 723–749 (EDGD…DEAN).

Belongs to the PLPL family.

It localises to the membrane. Its function is as follows. Probable lipid hydrolase. In Debaryomyces hansenii (strain ATCC 36239 / CBS 767 / BCRC 21394 / JCM 1990 / NBRC 0083 / IGC 2968) (Yeast), this protein is Patatin-like phospholipase domain-containing protein DEHA2B04136g.